A 530-amino-acid polypeptide reads, in one-letter code: Estrogen receptor beta (530 aa).

Residues methionine 1–phenylalanine 148 form a modulating region. The residue at position 61 (serine 61) is a Phosphoserine; alternate. O-linked (GlcNAc) serine; alternate glycosylation occurs at serine 61. Serine 87 and serine 105 each carry phosphoserine; by MAPK. 2 NR C4-type zinc fingers span residues cysteine 149–cysteine 169 and cysteine 185–cysteine 209. The nuclear receptor DNA-binding region spans cysteine 149–methionine 214. The region spanning serine 264 to histidine 498 is the NR LBD domain. Residues serine 506–threonine 515 show a composition bias toward polar residues. Residues serine 506–glutamine 530 form a disordered region.

This sequence belongs to the nuclear hormone receptor family. NR3 subfamily. Binds DNA as a homodimer. Can form a heterodimer with ESR1. Interacts with NCOA1, NCOA3, NCOA5 and NCOA6 coactivators, leading to a strong increase of transcription of target genes. Interacts with UBE1C and AKAP13. Interacts with DNTTIP2. Interacts with CCDC62 in the presence of estradiol/E2; this interaction seems to enhance the transcription of target genes. Interacts with DNAAF4. Interacts with PRMT2. Interacts with CCAR2 (via N-terminus) in a ligand-independent manner. Interacts with RBM39, in the presence of estradiol (E2). Interacts with STUB1/CHIP. Phosphorylation at Ser-87 and Ser-105 recruits NCOA1. Expressed in prostate, ovary, Leydig cells and in epithelium of the efferent ductules and of the initial segment of the epididymis.

Its subcellular location is the nucleus. Its function is as follows. Nuclear hormone receptor. Binds estrogens with an affinity similar to that of ESR1/ER-alpha, and activates expression of reporter genes containing estrogen response elements (ERE) in an estrogen-dependent manner. This is Estrogen receptor beta (Esr2) from Mus musculus (Mouse).